We begin with the raw amino-acid sequence, 157 residues long: Phosphopantetheine adenylyltransferase (157 aa).

Residue Ser8 coordinates substrate. ATP contacts are provided by residues 8–9 (SF) and His16. 3 residues coordinate substrate: Lys40, Leu72, and Arg86. ATP-binding positions include 87–89 (GLR), Glu97, and 121–127 (FGTISSS).

It belongs to the bacterial CoaD family. Homohexamer. Mg(2+) is required as a cofactor.

The protein localises to the cytoplasm. It carries out the reaction (R)-4'-phosphopantetheine + ATP + H(+) = 3'-dephospho-CoA + diphosphate. It functions in the pathway cofactor biosynthesis; coenzyme A biosynthesis; CoA from (R)-pantothenate: step 4/5. Its function is as follows. Reversibly transfers an adenylyl group from ATP to 4'-phosphopantetheine, yielding dephospho-CoA (dPCoA) and pyrophosphate. This chain is Phosphopantetheine adenylyltransferase, found in Cutibacterium acnes (strain DSM 16379 / KPA171202) (Propionibacterium acnes).